A 350-amino-acid chain; its full sequence is Probable DNA polymerase III subunit delta (350 aa).

Belongs to the DNA polymerase HolA subunit family. Component of the DNA clamp loading complex consisting of tau(3):delta(1):delta'(1). The DNA polymerase III holoenzyme complex contains at least 10 different subunits organized into 3 functionally essential subassemblies: the Pol III core, the beta sliding clamp processivity factor and the clamp-loading complex. The Pol III core (subunits alpha, epsilon and theta) contains the polymerase and the 3'-5' exonuclease proofreading activities. The polymerase is tethered to the template via the dimeric beta sliding clamp processivity factor. The DNA clamp-loading complex assembles the beta sliding clamp onto the primed template and plays a central role in the organization and communication at the replication fork.

It carries out the reaction DNA(n) + a 2'-deoxyribonucleoside 5'-triphosphate = DNA(n+1) + diphosphate. Functionally, part of the beta sliding clamp loading complex, which hydrolyzes ATP to load the beta clamp onto primed DNA to form the DNA replication pre-initiation complex. DNA polymerase III is a complex, multichain enzyme responsible for most of the replicative synthesis in bacteria. This DNA polymerase also exhibits 3'-5' exonuclease activity. The delta subunit is the wrench that will open the beta subunit dimer. The DNA clamp loading complex (tau(3),delta,delta') is thought to load beta dimers onto DNA by binding ATP which alters the complex's conformation so it can bind beta sliding clamp dimers and open them at one interface. Primed DNA is recognized, ATP is hydrolyzed releasing the clamp loading complex and closing the beta sliding clamp ring around the primed DNA. This is Probable DNA polymerase III subunit delta from Aquifex aeolicus (strain VF5).